A 165-amino-acid chain; its full sequence is Glutamyl-tRNA(Gln) amidotransferase subunit F, mitochondrial (165 aa).

Residues 137–153 are compositionally biased toward basic and acidic residues; sequence VSDQRGERGFDTSELRT. Positions 137–165 are disordered; sequence VSDQRGERGFDTSELRTRINRAKSTAEKE.

Belongs to the GatF family. As to quaternary structure, subunit of the heterotrimeric GatFAB amidotransferase (AdT) complex, composed of A, B and F subunits.

It localises to the mitochondrion inner membrane. It carries out the reaction L-glutamyl-tRNA(Gln) + L-glutamine + ATP + H2O = L-glutaminyl-tRNA(Gln) + L-glutamate + ADP + phosphate + H(+). Its function is as follows. Allows the formation of correctly charged Gln-tRNA(Gln) through the transamidation of misacylated Glu-tRNA(Gln) in the mitochondria. The reaction takes place in the presence of glutamine and ATP through an activated gamma-phospho-Glu-tRNA(Gln). Required for proper protein synthesis within the mitochondrion. The protein is Glutamyl-tRNA(Gln) amidotransferase subunit F, mitochondrial of Clavispora lusitaniae (strain ATCC 42720) (Yeast).